We begin with the raw amino-acid sequence, 178 residues long: Dual-action ribosomal maturation protein DarP (178 aa).

The protein belongs to the DarP family.

The protein localises to the cytoplasm. Member of a network of 50S ribosomal subunit biogenesis factors which assembles along the 30S-50S interface, preventing incorrect 23S rRNA structures from forming. Promotes peptidyl transferase center (PTC) maturation. This is Dual-action ribosomal maturation protein DarP from Mannheimia succiniciproducens (strain KCTC 0769BP / MBEL55E).